The following is a 404-amino-acid chain: Protein IQ-DOMAIN 12 (404 aa).

A calmodulin-binding region spans residues 8-25 (FGWMKRLFICEAKARAEK). The Nuclear localization signal 1 motif lies at 11 to 18 (MKRLFICE). IQ domains lie at 108–135 (NVAA…ALVR) and 136–158 (LQAI…SSHS). A Nuclear localization signal 2 motif is present at residues 226–233 (IKRDRMLK).

It belongs to the IQD family. In terms of assembly, binds to multiple calmodulin (CaM) in the presence of Ca(2+) and CaM-like proteins.

Its subcellular location is the nucleus. It localises to the cell membrane. In terms of biological role, may be involved in cooperative interactions with calmodulins or calmodulin-like proteins. Recruits calmodulin proteins to microtubules, thus being a potential scaffold in cellular signaling and trafficking. May associate with nucleic acids and regulate gene expression at the transcriptional or post-transcriptional level. The sequence is that of Protein IQ-DOMAIN 12 from Arabidopsis thaliana (Mouse-ear cress).